The primary structure comprises 148 residues: HTH-type transcriptional regulator Ptr1 (148 aa).

An HTH asnC-type domain is found at 2–63; that stretch reads LDRIDLKILR…SINPKNLGFE (62 aa). Residues 21–40 constitute a DNA-binding region (H-T-H motif); that stretch reads FREIGRELGISEGTVRNRVK.

As to quaternary structure, homodimer.

Its function is as follows. Participates in positive as well as negative regulation of transcription. Binds to its own promoter. This is HTH-type transcriptional regulator Ptr1 (ptr1) from Methanocaldococcus jannaschii (strain ATCC 43067 / DSM 2661 / JAL-1 / JCM 10045 / NBRC 100440) (Methanococcus jannaschii).